A 374-amino-acid polypeptide reads, in one-letter code: NAD-capped RNA hydrolase ndx-9 (374 aa).

Zn(2+) contacts are provided by Cys-181, Cys-184, Cys-199, and Cys-202. Substrate is bound by residues Tyr-207, 243 to 245 (AGF), Glu-259, Glu-263, and Glu-307. Residues 208 to 336 (PTFSPVSITL…LADPLLKNLP (129 aa)) form the Nudix hydrolase domain. The Mg(2+) site is built by Ala-243, Glu-259, Glu-263, and Glu-307. The Nudix box signature appears at 244 to 265 (GFAHSGESMAECARREIAEEVG). The short motif at 367-369 (LEN) is the Microbody targeting signal element.

It belongs to the Nudix hydrolase family. NudC subfamily. As to quaternary structure, homodimer. The cofactor is Mg(2+). It depends on Mn(2+) as a cofactor. Zn(2+) serves as cofactor.

The enzyme catalyses a 5'-end NAD(+)-phospho-ribonucleoside in mRNA + H2O = a 5'-end phospho-adenosine-phospho-ribonucleoside in mRNA + beta-nicotinamide D-ribonucleotide + 2 H(+). It carries out the reaction NAD(+) + H2O = beta-nicotinamide D-ribonucleotide + AMP + 2 H(+). The catalysed reaction is NADH + H2O = reduced beta-nicotinamide D-ribonucleotide + AMP + 2 H(+). In terms of biological role, mRNA decapping enzyme that specifically removes the nicotinamide adenine dinucleotide (NAD) cap from a subset of mRNAs by hydrolyzing the diphosphate linkage to produce nicotinamide mononucleotide (NMN) and 5' monophosphate mRNA. The NAD-cap is present at the 5'-end of some RNAs; in contrast to the canonical N7 methylguanosine (m7G) cap, the NAD cap promotes mRNA decay. Mediates the hydrolysis of some nucleoside diphosphate derivatives. The polypeptide is NAD-capped RNA hydrolase ndx-9 (ndx-9) (Caenorhabditis elegans).